Here is a 101-residue protein sequence, read N- to C-terminus: Urease subunit beta (101 aa).

This sequence belongs to the urease beta subunit family. Heterotrimer of UreA (gamma), UreB (beta) and UreC (alpha) subunits. Three heterotrimers associate to form the active enzyme.

The protein localises to the cytoplasm. The enzyme catalyses urea + 2 H2O + H(+) = hydrogencarbonate + 2 NH4(+). Its pathway is nitrogen metabolism; urea degradation; CO(2) and NH(3) from urea (urease route): step 1/1. In Stutzerimonas stutzeri (strain A1501) (Pseudomonas stutzeri), this protein is Urease subunit beta.